We begin with the raw amino-acid sequence, 198 residues long: Putative pseudouridine methyltransferase (198 aa).

Residues methionine 132 and cysteine 186 each contribute to the S-adenosyl-L-methionine site.

Belongs to the methyltransferase superfamily. TrmY family.

Its subcellular location is the cytoplasm. The sequence is that of Putative pseudouridine methyltransferase from Photobacterium profundum (strain SS9).